The following is a 1667-amino-acid chain: Androglobin (1667 aa).

Over residues 1–11 (MASKQTKKKEV) the composition is skewed to basic residues. Disordered regions lie at residues 1–45 (MASK…KGKF), 347–387 (SLTT…KFSL), and 540–566 (GSDL…ITKA). Positions 70-411 (KDKTGKSPVF…SLSDCSSAIQ (342 aa)) constitute a Calpain catalytic domain. A compositionally biased stretch (basic and acidic residues) spans 353 to 384 (APEKSDKVPKEKADARDIGKKRSKDGEKEKFK). Over residues 554-566 (THSQTDLSQITKA) the composition is skewed to polar residues. The Globin; C-terminal part domain occupies 763–890 (HICSMVSFVI…EEVSLVEWLD (128 aa)). Gln792 and His824 together coordinate heme b. Positions 906-935 (EVAAAIKIQAMWRGTYVRLLMKARIPDTKE) constitute an IQ domain. The Globin; N-terminal part domain occupies 936–968 (NISVADTLQKVWAVLEMNLEQYAVSLLRLMFKS). 2 disordered regions span residues 1297-1355 (INLG…QQED) and 1420-1522 (TSDA…RSPT). A compositionally biased stretch (polar residues) spans 1301 to 1315 (SPDSHTISEGQKSSV). Basic and acidic residues-rich tracts occupy residues 1325–1340 (EKSS…KQAP) and 1433–1450 (TKPK…KEPN). Residues 1451–1468 (SKNSAGSESKEMTQTGSG) show a composition bias toward polar residues. A compositionally biased stretch (low complexity) spans 1487 to 1498 (STSSESGGVSSP). Over residues 1499–1511 (GKEEREQSTRKEN) the composition is skewed to basic and acidic residues. The span at 1512-1522 (IQTGPRTRSPT) shows a compositional bias: polar residues. Residues 1588-1629 (QEERLKLKDEVLDMYKEMQDSLDEARQKIFDIREEYRNKLLE) adopt a coiled-coil conformation. The segment at 1646 to 1667 (KLETEKMTPAPDTQKKKKGKKK) is disordered.

In the central section; belongs to the globin family. It in the N-terminal section; belongs to the peptidase C2 family. In terms of assembly, interacts with septin SEPT10; contributes to in vitro proteolytic cleavage of SEPT10 in a calmodulin-dependent manner. Interacts with CFAP69. Interacts with SPEF2. May interact with calmodulin.

The protein resides in the cell projection. It localises to the cilium. Its subcellular location is the flagellum. Probable chimeric globin with a bis-histidyl six-coordinate heme-iron atom through which it could bind dioxygen, carbon monoxide and nitric oxide. Required for sperm flagellum formation and maturation of elongating spermatids, thus playing an essential role in male fertility. This chain is Androglobin, found in Homo sapiens (Human).